Consider the following 554-residue polypeptide: Sesquiterpene synthase 14a (554 aa).

Residues aspartate 305, aspartate 309, aspartate 449, and glutamate 457 each contribute to the Mg(2+) site. Positions 305–309 (DDLYD) match the DDXXD motif motif.

The protein belongs to the terpene synthase family. Tpsa subfamily. The cofactor is Mg(2+). Requires Mn(2+) as cofactor. Mostly expressed in stem trichomes.

It carries out the reaction (2E,6E)-farnesyl diphosphate = beta-bisabolene + diphosphate. The enzyme catalyses (2E,6E)-farnesyl diphosphate = (Z)-alpha-bisabolene + diphosphate. It catalyses the reaction (2E,6E)-farnesyl diphosphate = beta-acoradiene + diphosphate. The catalysed reaction is (2E,6E)-farnesyl diphosphate = (E)-gamma-bisabolene + diphosphate. It carries out the reaction (2E,6E)-farnesyl diphosphate = (E)-beta-farnesene + diphosphate. The enzyme catalyses (2E,6E)-farnesyl diphosphate = (Z)-beta-farnesene + diphosphate. It catalyses the reaction (2E)-geranyl diphosphate = limonene + diphosphate. The catalysed reaction is (2E)-geranyl diphosphate = beta-myrcene + diphosphate. The protein operates within secondary metabolite biosynthesis; terpenoid biosynthesis. Functionally, sesquiterpene synthase involved in the biosynthesis of volatile compounds. Mediates the conversion of (2E,6E)-farnesyl diphosphate ((EE)-FPP) into beta-bisabolene, beta-farnesene, (E)-gamma-bisabolene, beta-acoradiene, selinene and (Z)-alpha-bisabolene. Low or no activity with (2Z,6Z)-farnesyl diphosphate ((ZZ)-FPP). Can act with a low efficiency as a monoterpene synthase with geranyl diphosphate (GPP) as substrate, thus producing beta-myrcene and limonene. The polypeptide is Sesquiterpene synthase 14a (Solanum habrochaites (Wild tomato)).